Here is a 1117-residue protein sequence, read N- to C-terminus: A disintegrin and metalloproteinase with thrombospondin motifs 6 (1117 aa).

An N-terminal signal peptide occupies residues 1 to 21 (MEILWKTLTWILSLIMASSEF). Positions 22–244 (HSDHRLSYSS…NTHIHHRQKR (223 aa)) are excised as a propeptide. Residues asparagine 99, asparagine 172, asparagine 222, and asparagine 234 are each glycosylated (N-linked (GlcNAc...) asparagine). One can recognise a Peptidase M12B domain in the interval 250–468 (RFVETLVVAD…GRGTCLDNEP (219 aa)). Intrachain disulfides connect cysteine 326/cysteine 387, cysteine 362/cysteine 369, cysteine 381/cysteine 463, cysteine 420/cysteine 447, cysteine 490/cysteine 512, cysteine 501/cysteine 519, cysteine 507/cysteine 542, cysteine 532/cysteine 547, cysteine 570/cysteine 607, cysteine 574/cysteine 612, and cysteine 585/cysteine 597. Histidine 403 provides a ligand contact to Zn(2+). Glutamate 404 is an active-site residue. Histidine 407 and histidine 413 together coordinate Zn(2+). A Disintegrin domain is found at 495–557 (GATSRQCKYG…VPFGTWPQSI (63 aa)). The TSP type-1 1 domain occupies 558–613 (DGGWGPWSLWGECSRTCGGGVSSSLRHCDSPAPSGGGKYCLGERKRYRSCNTDPCP). Positions 717–843 (DAIEGFFNDS…GSGDNEVGFT (127 aa)) are spacer. N-linked (GlcNAc...) asparagine glycosylation is present at asparagine 724. TSP type-1 domains follow at residues 840–900 (VGFT…EPCP), 902–960 (EWFI…QSCP), 962–1007 (QWVA…SKPP), and 1018–1073 (PPPR…SKCD). 3 disulfide bridges follow: cysteine 911–cysteine 954, cysteine 915–cysteine 959, and cysteine 926–cysteine 943. An N-linked (GlcNAc...) asparagine glycan is attached at asparagine 956. Residues 1079–1117 (NTEECKDVNKVAYCPLVLKFKFCSRAYFRQMCCKTCQGH) enclose the PLAC domain.

Zn(2+) serves as cofactor. The precursor is cleaved by a furin endopeptidase. Post-translationally, glycosylated. Can be O-fucosylated by POFUT2 on a serine or a threonine residue found within the consensus sequence C1-X(2)-(S/T)-C2-G of the TSP type-1 repeat domains where C1 and C2 are the first and second cysteine residue of the repeat, respectively. Fucosylated repeats can then be further glycosylated by the addition of a beta-1,3-glucose residue by the glucosyltransferase, B3GALTL. Fucosylation mediates the efficient secretion of ADAMTS family members. Can also be C-glycosylated with one or two mannose molecules on tryptophan residues within the consensus sequence W-X-X-W of the TPRs, and N-glycosylated. These other glycosylations can also facilitate secretion. As to expression, expressed at low levels in placenta and barely detectable in a number of other tissues.

The protein localises to the secreted. The protein resides in the extracellular space. It localises to the extracellular matrix. The chain is A disintegrin and metalloproteinase with thrombospondin motifs 6 (ADAMTS6) from Homo sapiens (Human).